Here is a 441-residue protein sequence, read N- to C-terminus: Xaa-Pro dipeptidase (441 aa).

Mn(2+)-binding residues include Asp-244, Asp-255, His-336, Glu-381, and Glu-420.

The protein belongs to the peptidase M24B family. Bacterial-type prolidase subfamily. Mn(2+) is required as a cofactor.

The enzyme catalyses Xaa-L-Pro dipeptide + H2O = an L-alpha-amino acid + L-proline. Its function is as follows. Splits dipeptides with a prolyl residue in the C-terminal position. This is Xaa-Pro dipeptidase from Xanthomonas campestris pv. campestris (strain B100).